The sequence spans 316 residues: 4-hydroxy-3-methylbut-2-enyl diphosphate reductase (316 aa).

A [4Fe-4S] cluster-binding site is contributed by cysteine 12. (2E)-4-hydroxy-3-methylbut-2-enyl diphosphate is bound by residues histidine 41 and histidine 74. Residues histidine 41 and histidine 74 each contribute to the dimethylallyl diphosphate site. Histidine 41 and histidine 74 together coordinate isopentenyl diphosphate. Cysteine 96 provides a ligand contact to [4Fe-4S] cluster. Histidine 124 is a (2E)-4-hydroxy-3-methylbut-2-enyl diphosphate binding site. A dimethylallyl diphosphate-binding site is contributed by histidine 124. Histidine 124 lines the isopentenyl diphosphate pocket. The Proton donor role is filled by glutamate 126. Threonine 169 is a binding site for (2E)-4-hydroxy-3-methylbut-2-enyl diphosphate. Cysteine 199 is a [4Fe-4S] cluster binding site. Positions 227, 228, 229, and 271 each coordinate (2E)-4-hydroxy-3-methylbut-2-enyl diphosphate. Dimethylallyl diphosphate-binding residues include serine 227, serine 228, asparagine 229, and serine 271. Residues serine 227, serine 228, asparagine 229, and serine 271 each contribute to the isopentenyl diphosphate site.

This sequence belongs to the IspH family. It depends on [4Fe-4S] cluster as a cofactor.

The enzyme catalyses isopentenyl diphosphate + 2 oxidized [2Fe-2S]-[ferredoxin] + H2O = (2E)-4-hydroxy-3-methylbut-2-enyl diphosphate + 2 reduced [2Fe-2S]-[ferredoxin] + 2 H(+). The catalysed reaction is dimethylallyl diphosphate + 2 oxidized [2Fe-2S]-[ferredoxin] + H2O = (2E)-4-hydroxy-3-methylbut-2-enyl diphosphate + 2 reduced [2Fe-2S]-[ferredoxin] + 2 H(+). It functions in the pathway isoprenoid biosynthesis; dimethylallyl diphosphate biosynthesis; dimethylallyl diphosphate from (2E)-4-hydroxy-3-methylbutenyl diphosphate: step 1/1. The protein operates within isoprenoid biosynthesis; isopentenyl diphosphate biosynthesis via DXP pathway; isopentenyl diphosphate from 1-deoxy-D-xylulose 5-phosphate: step 6/6. Its function is as follows. Catalyzes the conversion of 1-hydroxy-2-methyl-2-(E)-butenyl 4-diphosphate (HMBPP) into a mixture of isopentenyl diphosphate (IPP) and dimethylallyl diphosphate (DMAPP). Acts in the terminal step of the DOXP/MEP pathway for isoprenoid precursor biosynthesis. The chain is 4-hydroxy-3-methylbut-2-enyl diphosphate reductase from Xanthomonas campestris pv. campestris (strain ATCC 33913 / DSM 3586 / NCPPB 528 / LMG 568 / P 25).